The following is a 167-amino-acid chain: Zymogen granule membrane protein 16 (167 aa).

The first 16 residues, 1-16 (MLAIALLVLLCASASA), serve as a signal peptide directing secretion. Residues 24 to 159 (SSYSGEYGGK…IDAISLHWDT (136 aa)) form the Jacalin-type lectin domain.

The protein belongs to the jacalin lectin family. As to expression, expressed in pancreas, colon, duodenum, and much less in stomach.

It localises to the secreted. It is found in the extracellular space. Its subcellular location is the extracellular matrix. The protein resides in the zymogen granule lumen. The protein localises to the golgi apparatus lumen. Its function is as follows. May play a role in protein trafficking. May act as a linker molecule between the submembranous matrix on the luminal side of zymogen granule membrane (ZGM) and aggregated secretory proteins during granule formation in the TGN. The protein is Zymogen granule membrane protein 16 (Zg16) of Rattus norvegicus (Rat).